A 254-amino-acid polypeptide reads, in one-letter code: HTH-type transcriptional repressor DasR (254 aa).

The 71-residue stretch at 17–87 folds into the HTH gntR-type domain; the sequence is RTARVPKYYR…QGKGTFVAKP (71 aa). A DNA-binding region (H-T-H motif) is located at residues 47–66; that stretch reads ERTLAAEFDTSRTTVRQALQ.

It localises to the cytoplasm. With respect to regulation, binding to the target genes is abolished by GlcN6P, a central molecule in N-acetylglucosamine metabolism. In terms of biological role, global regulator that is part of the nutrient-sensing system. In the absence of glucosamine 6-P (GlcN6P), represses the phosphotransferase system (PTS) specific for the uptake of N-acetylglucosamine (PTSNag), and genes involved in the metabolism of chitin, as well as several genes involved in development, thereby linking carbon availability to morphogenesis. Also regulates the expression of the ABC transporters DasABC and NgcEFG, which are involved in N,N'-diacetylchitobiose ((GlcNAc)2) uptake. Binds to the DNA consensus sequence 5'-ACTGGTCTAGACCACT-3'. This chain is HTH-type transcriptional repressor DasR (dasR), found in Streptomyces coelicolor (strain ATCC BAA-471 / A3(2) / M145).